A 1416-amino-acid polypeptide reads, in one-letter code: DNA-directed RNA polymerase subunit beta (1416 aa).

The disordered stretch occupies residues Ala1388–Ala1416.

The protein belongs to the RNA polymerase beta chain family. The RNAP catalytic core consists of 2 alpha, 1 beta, 1 beta' and 1 omega subunit. When a sigma factor is associated with the core the holoenzyme is formed, which can initiate transcription.

The catalysed reaction is RNA(n) + a ribonucleoside 5'-triphosphate = RNA(n+1) + diphosphate. In terms of biological role, DNA-dependent RNA polymerase catalyzes the transcription of DNA into RNA using the four ribonucleoside triphosphates as substrates. This is DNA-directed RNA polymerase subunit beta from Anaeromyxobacter sp. (strain Fw109-5).